A 439-amino-acid polypeptide reads, in one-letter code: Glutamine synthetase (439 aa).

The region spanning 12-93 is the GS beta-grasp domain; it reads RSPKFVQLIF…VYGYIYKDGK (82 aa). The GS catalytic domain maps to 99-439; that stretch reads PRGVLKRVIE…EWELERYFFI (341 aa). Mg(2+) is bound by residues Glu122 and Glu124. Residue Glu172 participates in ATP binding. Residues Glu177 and Glu184 each contribute to the Mg(2+) site. Gly229 is a binding site for L-glutamate. A Mg(2+)-binding site is contributed by His233. Residues 235-237 and Ser237 contribute to the ATP site; that span reads HIS. Arg283, Glu289, and Arg301 together coordinate L-glutamate. Residues Arg301 and Arg306 each contribute to the ATP site. Glu318 serves as a coordination point for Mg(2+). Residue Arg320 coordinates L-glutamate.

Belongs to the glutamine synthetase family. Oligomer of 12 subunits arranged in the form of two hexagons. Mg(2+) is required as a cofactor.

The protein resides in the cytoplasm. The enzyme catalyses L-glutamate + NH4(+) + ATP = L-glutamine + ADP + phosphate + H(+). In terms of biological role, probably involved in nitrogen metabolism via ammonium assimilation. Catalyzes the ATP-dependent biosynthesis of glutamine from glutamate and ammonia. In Pyrococcus abyssi (strain GE5 / Orsay), this protein is Glutamine synthetase.